The chain runs to 272 residues: Short-chain dehydrogenase srdC (272 aa).

7 residues coordinate NADP(+): Ile15, Asp65, Arg127, Tyr173, Lys177, Val206, and Thr208. Tyr173 acts as the Proton donor in catalysis. Residue Lys177 is the Lowers pKa of active site Tyr of the active site.

The protein belongs to the short-chain dehydrogenases/reductases (SDR) family.

In terms of biological role, short-chain dehydrogenase; part of the gene cluster that mediates the biosynthesis of sordarial, a salicylic aldehyde structurally related to the phytotoxin pyriculol. The most interesting aspect of this pathway is formation of an aromatic product from the highly reducing polyketide synthase srdA. SrdA synthesizes a reduced polyketide chain from one molecule of acetyl-CoA and five molecules of malonyl-CoA. The polyketide chain is then reductively released as an aldehyde. The oxidoreductases srdC, srdD and srdE then oxidize one of the hydroxy groups to facilitate the intramolecular aldol condensation, followed by dehydration to yield a salicylic aldehyde. This aldehyde can undergo facile reduction by endogenous reductases to yield the alcohol 1-hydroxy-2-hydroxymethyl-3-pent-1,3-dienylbenzene. The flavin-dependent srdI counteract against the propensity of the aldehydes to be reduced under physiological conditions and is responsible for reoxidizing 1-hydroxy-2-hydroxymethyl-3-pent-1,3-dienylbenzene back to the salicylic aldehyde. This salicylic aldehyde is then selectively epoxidized by the cupin-domain-containing oxidoreductase srdB to yield the epoxide, which can be hydrolyzed stereoselectively by the hydrolase srdG to give the final product sordarial. In Neurospora crassa (strain ATCC 24698 / 74-OR23-1A / CBS 708.71 / DSM 1257 / FGSC 987), this protein is Short-chain dehydrogenase srdC.